The following is a 196-amino-acid chain: DnaA initiator-associating protein DiaA (196 aa).

Residues 34–196 enclose the SIS domain; that stretch reads LVQSLLNGNK…DNTLFPHQDD (163 aa).

The protein belongs to the SIS family. DiaA subfamily. In terms of assembly, homotetramer; dimer of dimers.

In terms of biological role, required for the timely initiation of chromosomal replication via direct interactions with the DnaA initiator protein. This is DnaA initiator-associating protein DiaA from Klebsiella pneumoniae (strain 342).